A 419-amino-acid chain; its full sequence is Adenylosuccinate synthetase (419 aa).

Residues 15 to 21 and 43 to 45 each bind GTP; these read GDEGKGK and GHT. The active-site Proton acceptor is Asp-16. 2 residues coordinate Mg(2+): Asp-16 and Gly-43. Residues 16 to 19, 41 to 44, Thr-128, Arg-142, Gln-223, Thr-238, and Arg-302 each bind IMP; these read DEGK and NAGH. The active-site Proton donor is the His-44. 298–304 contributes to the substrate binding site; the sequence is TTTGRAR. GTP contacts are provided by residues Arg-304, 330 to 332, and 408 to 410; these read KLD and STS.

This sequence belongs to the adenylosuccinate synthetase family. As to quaternary structure, homodimer. The cofactor is Mg(2+).

The protein resides in the cytoplasm. The enzyme catalyses IMP + L-aspartate + GTP = N(6)-(1,2-dicarboxyethyl)-AMP + GDP + phosphate + 2 H(+). It participates in purine metabolism; AMP biosynthesis via de novo pathway; AMP from IMP: step 1/2. Plays an important role in the de novo pathway of purine nucleotide biosynthesis. Catalyzes the first committed step in the biosynthesis of AMP from IMP. The sequence is that of Adenylosuccinate synthetase from Sulfurimonas denitrificans (strain ATCC 33889 / DSM 1251) (Thiomicrospira denitrificans (strain ATCC 33889 / DSM 1251)).